We begin with the raw amino-acid sequence, 937 residues long: Inactive tyrosine-protein kinase transmembrane receptor ROR1 (937 aa).

The first 29 residues, 1-29 (MHRPRRRGTRPPPLALLAALLLAARGADA), serve as a signal peptide directing secretion. Residues 30 to 406 (QETELSVSAE…KEKNKMEILY (377 aa)) lie on the Extracellular side of the membrane. The 100-residue stretch at 42 to 141 (PTSSWNTSSE…VATNGKKVVS (100 aa)) folds into the Ig-like C2-type domain. N-linked (GlcNAc...) asparagine glycans are attached at residues asparagine 47 and asparagine 66. Cystine bridges form between cysteine 79–cysteine 131, cysteine 170–cysteine 235, cysteine 178–cysteine 228, cysteine 219–cysteine 260, cysteine 248–cysteine 296, cysteine 252–cysteine 282, cysteine 313–cysteine 391, cysteine 334–cysteine 374, and cysteine 362–cysteine 386. Residues 165-299 (EEDGFCQPYR…SPEAANCIRI (135 aa)) form the FZ domain. Residue asparagine 184 is glycosylated (N-linked (GlcNAc...) asparagine). Residues 312 to 391 (KCYNSTGVDY…KSDLCDIPAC (80 aa)) enclose the Kringle domain. The N-linked (GlcNAc...) asparagine glycan is linked to asparagine 315. A helical membrane pass occupies residues 407–427 (ILVPSVAIPLAIAFLFFFICV). Residues 428 to 937 (CRNNQKSSSP…HTESMISAEV (510 aa)) are Cytoplasmic-facing. The region spanning 473 to 746 (VRFMEELGEC…PRFKDIHVRL (274 aa)) is the Protein kinase domain. Residues 479–487 (LGECTFGKI) and lysine 506 contribute to the ATP site. Tyrosine 645 carries the post-translational modification Phosphotyrosine; by autocatalysis. The span at 753–762 (SSHTSSTTPS) shows a compositional bias: low complexity. Disordered regions lie at residues 753-778 (SSHT…ASPV), 840-890 (GPPR…HMSI), and 916-937 (QSSL…SAEV). Residues 763 to 778 (GGNATTQTTSLSASPV) show a composition bias toward polar residues. Residues 854–864 (RSPSSASGSTS) show a composition bias toward low complexity. Over residues 865–880 (TGHVASLPSSGSNQEA) the composition is skewed to polar residues.

Belongs to the protein kinase superfamily. Tyr protein kinase family. ROR subfamily. In terms of assembly, interacts with ERBB2 and IGFBP5. As to expression, at postnatal P0, expressed in heart, lung, liver, kidney, spleen and inner ear.

Its subcellular location is the membrane. It is found in the cell projection. The protein localises to the axon. Functionally, has very low kinase activity in vitro and is unlikely to function as a tyrosine kinase in vivo. Receptor for ligand WNT5A which activate downstream NFkB signaling pathway and may result in the inhibition of WNT3A-mediated signaling. In inner ear, crucial for spiral ganglion neurons to innervate auditory hair cells. Via IGFBP5 ligand, forms a complex with ERBB2 to enhance CREB oncogenic signaling. This is Inactive tyrosine-protein kinase transmembrane receptor ROR1 (Ror1) from Mus musculus (Mouse).